The following is a 290-amino-acid chain: Hydroxyacylglutathione hydrolase-like protein (290 aa).

His-54, His-56, Asp-58, His-59, His-110, Asp-134, and His-172 together coordinate Zn(2+).

The protein belongs to the metallo-beta-lactamase superfamily. Glyoxalase II family. Zn(2+) is required as a cofactor.

Its function is as follows. Hydrolase acting on ester bonds. The protein is Hydroxyacylglutathione hydrolase-like protein (HAGHL) of Homo sapiens (Human).